A 557-amino-acid polypeptide reads, in one-letter code: Urocanate hydratase (557 aa).

NAD(+)-binding positions include 53-54 (GG), glutamine 131, 177-179 (GMG), glutamate 197, arginine 202, 243-244 (NA), 264-268 (QTSAH), 274-275 (YL), and tyrosine 323. Cysteine 411 is an active-site residue. NAD(+) is bound at residue glycine 493.

This sequence belongs to the urocanase family. The cofactor is NAD(+).

It is found in the cytoplasm. It catalyses the reaction 4-imidazolone-5-propanoate = trans-urocanate + H2O. The protein operates within amino-acid degradation; L-histidine degradation into L-glutamate; N-formimidoyl-L-glutamate from L-histidine: step 2/3. In terms of biological role, catalyzes the conversion of urocanate to 4-imidazolone-5-propionate. In Pseudomonas putida (strain ATCC 700007 / DSM 6899 / JCM 31910 / BCRC 17059 / LMG 24140 / F1), this protein is Urocanate hydratase.